Here is a 345-residue protein sequence, read N- to C-terminus: Large ribosomal subunit protein uL4 (345 aa).

Ala2 carries the N-acetylalanine modification.

Belongs to the universal ribosomal protein uL4 family.

In Caenorhabditis elegans, this protein is Large ribosomal subunit protein uL4 (rpl-4).